The following is a 269-amino-acid chain: MKKLDYHFHSHFSADSEELPRKHVTEAIAHGLEEICFTEHRDFYFPGMDFSLNLPEYFQEINRLQAEFKDKIKIKIGLEMGIDLRFKSEINQFIDSAPFDFVIASVHEIGDIEVYDGTEFYLQKIKEEAQREYLLACLDVVQNFENYNSFGHLDYVARYGPYTDKSIKFAENREILFEILRALASKEKALEINTRLFDDPKTEQFYSDLLINFKKLGGKFITLGTDSHIAKRDWLSIHKARTLIKKAGFHELATFSGMKIDKNKKSIKE.

It belongs to the PHP hydrolase family. HisK subfamily.

It catalyses the reaction L-histidinol phosphate + H2O = L-histidinol + phosphate. It participates in amino-acid biosynthesis; L-histidine biosynthesis; L-histidine from 5-phospho-alpha-D-ribose 1-diphosphate: step 8/9. This Lactococcus lactis subsp. lactis (strain IL1403) (Streptococcus lactis) protein is Histidinol-phosphatase (hisK).